Here is a 569-residue protein sequence, read N- to C-terminus: Sulfite reductase [NADPH] hemoprotein beta-component (569 aa).

Positions 433, 439, 478, and 482 each coordinate [4Fe-4S] cluster. Cysteine 482 contacts siroheme.

It belongs to the nitrite and sulfite reductase 4Fe-4S domain family. In terms of assembly, alpha(8)-beta(8). The alpha component is a flavoprotein, the beta component is a hemoprotein. It depends on siroheme as a cofactor. [4Fe-4S] cluster serves as cofactor.

It carries out the reaction hydrogen sulfide + 3 NADP(+) + 3 H2O = sulfite + 3 NADPH + 4 H(+). The protein operates within sulfur metabolism; hydrogen sulfide biosynthesis; hydrogen sulfide from sulfite (NADPH route): step 1/1. Its function is as follows. Component of the sulfite reductase complex that catalyzes the 6-electron reduction of sulfite to sulfide. This is one of several activities required for the biosynthesis of L-cysteine from sulfate. In Buchnera aphidicola subsp. Acyrthosiphon pisum (strain 5A), this protein is Sulfite reductase [NADPH] hemoprotein beta-component.